We begin with the raw amino-acid sequence, 712 residues long: MATPAAVNPPEMASDIPGSVTLPVAPMAATGQVRMAGAMPARGGKRRSGMDFDDEDGEGPSKFSRENHSEIERRRRNKMTQYITELSDMVPTCSALARKPDKLTILRMAVSHMKSMRGTGNKSTDGAYKPSFLTEQELKHLILEAADGFLFVVAAETGRVIYVSDSVTPVLNQPQSEWFGSTLYEQVHPDDVEKLREQLCTSENSMTGRILDLKTGTVKKEGQQSSMRMCMGSRRSFICRMRCGNAPLDHLPLNRITTMRKRFRNGLGPVKEGEAQYAVVHCTGYIKAWPPAGMSIPEEDADVGQGSKYCLVAIGRLQVTSSPVCMDMSGMSVPTEFLSRHNSDGIITFVDPRCISVIGYQPQDLLGKDILEFCHPEDQSHLRESFQQVVKLKGQVLSVMYRFRTKNREWLLIRTSSFTFQNPYSDEIEYVICTNTNVKQLQQQQAELEVHQRDGLSSYDLSQVPVPNLPTGVHEAGKPVEKADAIFSQERDPRFAEMFAGISASEKKMMSSASASGSQQIYSQGSPFPAGHSGKAFSSSVVHVPGVNDIQSSSSTGQNISQISRQLNQGQVAWTGSRPPFPGQPSKTQSSAFGIGSSHPYPADPSSYSPLSSPAASSPSGNAYPSLANRTPGFAESGQSGGQFQGRPSEVWSQWQSQHHGQQSGEQHSHQQPGQTEVFQDMLPMPGDPTQGTGNYNIEDFADLGMFPPFSE.

2 disordered regions span residues 1 to 20 and 35 to 74; these read MATPAAVNPPEMASDIPGSV and MAGAMPARGGKRRSGMDFDDEDGEGPSKFSRENHSEIERR. Arg42 bears the Omega-N-methylarginine mark. The segment covering 63-73 has biased composition (basic and acidic residues); sequence FSRENHSEIER. A bHLH domain is found at 63-116; it reads FSRENHSEIERRRRNKMTQYITELSDMVPTCSALARKPDKLTILRMAVSHMKSM. 2 PAS domains span residues 134–209 and 323–393; these read TEQE…MTGR and PVCM…VKLK. A PAC domain is found at 398–441; sequence SVMYRFRTKNREWLLIRTSSFTFQNPYSDEIEYVICTNTNVKQL. The interval 573–712 is disordered; the sequence is AWTGSRPPFP…DLGMFPPFSE (140 aa). 2 stretches are compositionally biased toward low complexity: residues 597–626 and 653–675; these read SSHPYPADPSSYSPLSSPAASSPSGNAYPS and SQWQSQHHGQQSGEQHSHQQPGQ.

Efficient DNA binding requires dimerization with another bHLH protein. Heterodimer with NPAS4 or SIM1. Heterodimer with the aryl hydrocarbon receptor (AHR) or the SIM1 protein. Interacts with TACC3.

Its subcellular location is the nucleus. Functionally, transcription factor that plays a role in the development of the hypothalamo-pituitary axis, postnatal brain growth, and visual and renal function. Specifically recognizes the xenobiotic response element (XRE). The polypeptide is Aryl hydrocarbon receptor nuclear translocator 2 (Arnt2) (Rattus norvegicus (Rat)).